The sequence spans 261 residues: Probable cyclic nucleotide phosphodiesterase PSM_A2567 (261 aa).

The Fe cation site is built by Asp-22, His-24, Asp-62, Asn-94, His-160, His-198, and His-200. AMP-binding positions include His-24, Asp-62, and Asn-94–His-95. His-200 provides a ligand contact to AMP.

The protein belongs to the cyclic nucleotide phosphodiesterase class-III family. The cofactor is Fe(2+).

This is Probable cyclic nucleotide phosphodiesterase PSM_A2567 from Pseudoalteromonas sp. (strain SM9913).